The primary structure comprises 147 residues: Large ribosomal subunit protein bL9 (147 aa).

It belongs to the bacterial ribosomal protein bL9 family.

In terms of biological role, binds to the 23S rRNA. The protein is Large ribosomal subunit protein bL9 of Thermoanaerobacter pseudethanolicus (strain ATCC 33223 / 39E) (Clostridium thermohydrosulfuricum).